We begin with the raw amino-acid sequence, 458 residues long: Glycine--tRNA ligase (458 aa).

Substrate-binding residues include Arg97 and Glu171. ATP contacts are provided by residues 203–205 (RNE), 213–218 (FRTREF), 287–288 (EL), and 331–334 (GADR). 218 to 222 (FEQME) provides a ligand contact to substrate. A substrate-binding site is contributed by 327–331 (EPSLG).

Belongs to the class-II aminoacyl-tRNA synthetase family. In terms of assembly, homodimer.

Its subcellular location is the cytoplasm. It carries out the reaction tRNA(Gly) + glycine + ATP = glycyl-tRNA(Gly) + AMP + diphosphate. Catalyzes the attachment of glycine to tRNA(Gly). The protein is Glycine--tRNA ligase of Bacillus anthracis.